The following is a 725-amino-acid chain: Kelch domain-containing protein SSO1033 (725 aa).

The first 28 residues, 1 to 28 (MKYGNMKKWAPLILFLFSLLLLQGISLH), serve as a signal peptide directing secretion. Kelch repeat units lie at residues 59 to 100 (SLYI…VYNN), 101 to 145 (TIYV…VYNN), 146 to 199 (AIYV…FNGT), 201 to 248 (LIIV…YYRG), 250 to 297 (LFIV…QVGN), and 299 to 342 (LYLA…VTLG). 4 consecutive Fibronectin type-III domains span residues 323-410 (PPLP…TPAS), 411-504 (VPNP…TKAS), 505-583 (VFAF…VVYY), and 585-665 (PPAS…TGDY).

The chain is Kelch domain-containing protein SSO1033 from Saccharolobus solfataricus (strain ATCC 35092 / DSM 1617 / JCM 11322 / P2) (Sulfolobus solfataricus).